A 1057-amino-acid polypeptide reads, in one-letter code: mRNA export factor elf1 (1057 aa).

2 ABC transporter domains span residues 440–659 and 692–1019; these read IEEE…VKPE and LKMT…KKKL. Residues 477–484 and 726–733 contribute to the ATP site; these read GHNGCGKS and GPNGAGKS. The residue at position 733 (Ser-733) is a Phosphoserine. The Chromo domain maps to 820–869; sequence RRVEALIGRQKLKKSFQYEIKWFGKPHKYNTWVSREILLENGFQKFVQAF. A compositionally biased stretch (basic and acidic residues) spans 1020 to 1036; the sequence is TRNEIKAKERRAREREL. Residues 1020 to 1057 are disordered; sequence TRNEIKAKERRARERELAWLQSPKGTEKPKSFFSDDEE. Residues Ser-1041 and Ser-1053 each carry the phosphoserine modification.

The protein belongs to the ABC transporter superfamily. ABCF family. EF3 subfamily.

Its subcellular location is the cytoplasm. It localises to the nucleus. Has a direct role in the mRNA export process. Appears to act within the rae1 mediated mRNA export pathway. In Schizosaccharomyces pombe (strain 972 / ATCC 24843) (Fission yeast), this protein is mRNA export factor elf1 (elf1).